Reading from the N-terminus, the 133-residue chain is 14 kDa fatty acid-binding protein (133 aa).

Residues R107 and 127 to 129 (RNY) each bind (5Z,8Z,11Z,14Z)-eicosatetraenoate. (9Z)-octadecenoate is bound by residues R107 and 127-129 (RNY).

Belongs to the calycin superfamily. Fatty-acid binding protein (FABP) family. In terms of tissue distribution, tubercles, muscle layers and body.

Its subcellular location is the cytoplasm. Functionally, may play a role in the transport of fatty acids. Binds various fatty acids, such as arachidonic, oleic, palmitic and linolenic acid (in vitro). The protein is 14 kDa fatty acid-binding protein of Schistosoma mansoni (Blood fluke).